The following is a 114-amino-acid chain: Probable 4-amino-4-deoxy-L-arabinose-phosphoundecaprenol flippase subunit ArnE (114 aa).

The region spanning 39 to 112 is the EamA domain; it reads RSPWLWLALF…VIGGVALLGQ (74 aa). Transmembrane regions (helical) follow at residues 41-61, 64-84, and 91-111; these read PWLW…LLVL, LPVS…TLIA, and PVDV…ALLG.

The protein belongs to the ArnE family. In terms of assembly, heterodimer of ArnE and ArnF.

It is found in the cell inner membrane. The protein operates within bacterial outer membrane biogenesis; lipopolysaccharide biosynthesis. Translocates 4-amino-4-deoxy-L-arabinose-phosphoundecaprenol (alpha-L-Ara4N-phosphoundecaprenol) from the cytoplasmic to the periplasmic side of the inner membrane. The polypeptide is Probable 4-amino-4-deoxy-L-arabinose-phosphoundecaprenol flippase subunit ArnE (Pseudomonas fluorescens (strain Pf0-1)).